The sequence spans 443 residues: D-serine dehydratase (443 aa).

Lys-118 is subject to N6-(pyridoxal phosphate)lysine.

It belongs to the serine/threonine dehydratase family. DsdA subfamily. As to quaternary structure, monomer. Pyridoxal 5'-phosphate serves as cofactor.

The catalysed reaction is D-serine = pyruvate + NH4(+). In Escherichia coli O17:K52:H18 (strain UMN026 / ExPEC), this protein is D-serine dehydratase.